The sequence spans 381 residues: Ubiquitin-associated protein 1-like (381 aa).

The UMA domain maps to 4–50 (LDGVPFKLPKGFVIGTEPLPGPELSVPACGEVLLGSMHDFSLERTAL). Disordered regions lie at residues 87–141 (LAPA…PGRR) and 185–228 (SLCP…LRSH). Basic and acidic residues predominate over residues 95–104 (RDPEAGHQER). Residues 105-123 (PEEEGEDEAEASSGSEEEP) show a composition bias toward acidic residues. The span at 124–141 (APSSLQPGSPASPGPGRR) shows a compositional bias: low complexity. Residues 197–216 (ASPPGPAPQHPAAPASPPRP) are compositionally biased toward pro residues.

In Homo sapiens (Human), this protein is Ubiquitin-associated protein 1-like (UBAP1L).